The following is a 176-amino-acid chain: Ribosome maturation factor RimM (176 aa).

The 74-residue stretch at 93-166 folds into the PRC barrel domain; the sequence is EGEYYHADLI…RVVIELPAEI (74 aa).

The protein belongs to the RimM family. As to quaternary structure, binds ribosomal protein uS19.

It is found in the cytoplasm. An accessory protein needed during the final step in the assembly of 30S ribosomal subunit, possibly for assembly of the head region. Essential for efficient processing of 16S rRNA. May be needed both before and after RbfA during the maturation of 16S rRNA. It has affinity for free ribosomal 30S subunits but not for 70S ribosomes. The polypeptide is Ribosome maturation factor RimM (Rhodopseudomonas palustris (strain BisB18)).